A 685-amino-acid chain; its full sequence is Allergen Cr-PI (685 aa).

The signal sequence occupies residues 1 to 16; sequence MKTALVFAAVVAFVAA. N-linked (GlcNAc...) asparagine glycosylation occurs at asparagine 233.

This sequence belongs to the hemocyanin family.

Its subcellular location is the secreted. It localises to the extracellular space. Its function is as follows. Larval storage protein (LSP) which may serve as a store of amino acids for synthesis of adult proteins. This is Allergen Cr-PI from Periplaneta americana (American cockroach).